The primary structure comprises 101 residues: Putative pterin-4-alpha-carbinolamine dehydratase (101 aa).

Belongs to the pterin-4-alpha-carbinolamine dehydratase family.

The catalysed reaction is (4aS,6R)-4a-hydroxy-L-erythro-5,6,7,8-tetrahydrobiopterin = (6R)-L-erythro-6,7-dihydrobiopterin + H2O. The protein is Putative pterin-4-alpha-carbinolamine dehydratase (phhB) of Ralstonia nicotianae (strain ATCC BAA-1114 / GMI1000) (Ralstonia solanacearum).